The primary structure comprises 904 residues: Thiamine diphosphate dependent-3-acetyloctanal synthase PigD (904 aa).

A disordered region spans residues 879-904 (RKAWAAQQPESTSTAFDQDPTQEATS). Residues 886–904 (QPESTSTAFDQDPTQEATS) are compositionally biased toward polar residues.

Belongs to the TPP enzyme family. Requires thiamine diphosphate as cofactor.

It catalyses the reaction (2E)-octenal + pyruvate + H(+) = (S)-3-acetyloctanal + CO2. Its pathway is antibiotic biosynthesis; prodigiosin biosynthesis. Its function is as follows. Involved in the biosynthesis of 2-methyl-3-n-amyl-pyrrole (MAP), one of the terminal products involved in the biosynthesis of the red antibiotic prodigiosin (Pig). Catalyzes the decarboxylation of pyruvate, followed by the modification of the resulting two-carbon fragment acetaldehyde at the C3 position of the 2-octenal (1,2-addition of acetaldehyde) giving 3-acetyloctanal. In vitro, it can act on a number of alpha,beta-unsaturated carbonyl compounds, including aldehydes and ketones, and can catalyze both 1,2-addition and Stetter-type 1,4-addition depending on the substrate. The polypeptide is Thiamine diphosphate dependent-3-acetyloctanal synthase PigD (Serratia marcescens).